A 404-amino-acid polypeptide reads, in one-letter code: Exodeoxyribonuclease 7 large subunit (404 aa).

It belongs to the XseA family. As to quaternary structure, heterooligomer composed of large and small subunits.

The protein resides in the cytoplasm. The catalysed reaction is Exonucleolytic cleavage in either 5'- to 3'- or 3'- to 5'-direction to yield nucleoside 5'-phosphates.. Its function is as follows. Bidirectionally degrades single-stranded DNA into large acid-insoluble oligonucleotides, which are then degraded further into small acid-soluble oligonucleotides. The protein is Exodeoxyribonuclease 7 large subunit of Ruminiclostridium cellulolyticum (strain ATCC 35319 / DSM 5812 / JCM 6584 / H10) (Clostridium cellulolyticum).